The following is a 357-amino-acid chain: Ribosomal RNA large subunit methyltransferase M (357 aa).

Residues Ser183, Ala216 to Gly219, Asp235, Asp255, and Asp271 each bind S-adenosyl-L-methionine. Lys300 acts as the Proton acceptor in catalysis.

This sequence belongs to the class I-like SAM-binding methyltransferase superfamily. RNA methyltransferase RlmE family. RlmM subfamily. Monomer.

The protein localises to the cytoplasm. It catalyses the reaction cytidine(2498) in 23S rRNA + S-adenosyl-L-methionine = 2'-O-methylcytidine(2498) in 23S rRNA + S-adenosyl-L-homocysteine + H(+). In terms of biological role, catalyzes the 2'-O-methylation at nucleotide C2498 in 23S rRNA. The chain is Ribosomal RNA large subunit methyltransferase M from Pseudomonas fluorescens (strain Pf0-1).